The sequence spans 423 residues: MAALAAGEPFSGRATGGDGGVRSDVMAPPAMAEEAKVSCLPLAREVGRRAAAAGGGQGRNFIVSPLSFHAALALVADGARGETQRELLGFLGSPSLAELHRSPTTRLVARLRHLPNTSFACGVWVDRGRALTPEFADAAASRYAAVAEPADFATQPEQARERVNAFVSDATEGLIRDVLPPNSVDSSTVVVLANAVHFKGTWSLPFHPSATFHAPFHLLDGGAVRAPFMTTEIPFERHVAAFPGFTALKLPYKNVGGGGGGDGVPRAAFYMLLLLPDGDGALKLADLYDMAVTTPEFIKKHTPAAEAPVRRLMVPKFKFSFKFEAKSDMRKLGVTRAFAGGDFSGMVTGGDGLFIAEVYHQATIEVDELGTVAAASTAVVMMQKGSSLPPVDFVADRPFLFAVVEELTGAVLFLGHVVNPLAE.

Residues Met-1 to Val-25 are disordered. The segment at Gly-370 to Val-394 is RCL.

This sequence belongs to the serpin family.

In terms of biological role, probable serine protease inhibitor. The protein is Putative serpin-Z12 of Oryza sativa subsp. japonica (Rice).